The following is a 225-amino-acid chain: 7-carboxy-7-deazaguanine synthase (225 aa).

Residues 12 to 14 and Arg27 contribute to the substrate site; that span reads IQG. Residues 18–225 enclose the Radical SAM core domain; it reads YIGVRQLFVR…PQVHKYLGVR (208 aa). Residues Cys31, Cys35, and Cys38 each coordinate [4Fe-4S] cluster. Thr40 contributes to the Mg(2+) binding site. Residue Thr80 coordinates substrate. Gly82 lines the S-adenosyl-L-methionine pocket.

The protein belongs to the radical SAM superfamily. 7-carboxy-7-deazaguanine synthase family. As to quaternary structure, homodimer. The cofactor is [4Fe-4S] cluster. S-adenosyl-L-methionine serves as cofactor. Mg(2+) is required as a cofactor.

The catalysed reaction is 6-carboxy-5,6,7,8-tetrahydropterin + H(+) = 7-carboxy-7-deazaguanine + NH4(+). Its pathway is purine metabolism; 7-cyano-7-deazaguanine biosynthesis. Catalyzes the complex heterocyclic radical-mediated conversion of 6-carboxy-5,6,7,8-tetrahydropterin (CPH4) to 7-carboxy-7-deazaguanine (CDG), a step common to the biosynthetic pathways of all 7-deazapurine-containing compounds. In Archaeoglobus fulgidus (strain ATCC 49558 / DSM 4304 / JCM 9628 / NBRC 100126 / VC-16), this protein is 7-carboxy-7-deazaguanine synthase.